The chain runs to 471 residues: Glutamate--tRNA ligase (471 aa).

The short motif at 9–19 is the 'HIGH' region element; it reads PSPTGYLHVGG. A 'KMSKS' region motif is present at residues 237-241; sequence KLSKR. Position 240 (lysine 240) interacts with ATP.

The protein belongs to the class-I aminoacyl-tRNA synthetase family. Glutamate--tRNA ligase type 1 subfamily. In terms of assembly, monomer.

The protein resides in the cytoplasm. The catalysed reaction is tRNA(Glu) + L-glutamate + ATP = L-glutamyl-tRNA(Glu) + AMP + diphosphate. In terms of biological role, catalyzes the attachment of glutamate to tRNA(Glu) in a two-step reaction: glutamate is first activated by ATP to form Glu-AMP and then transferred to the acceptor end of tRNA(Glu). This chain is Glutamate--tRNA ligase, found in Pectobacterium atrosepticum (strain SCRI 1043 / ATCC BAA-672) (Erwinia carotovora subsp. atroseptica).